Reading from the N-terminus, the 885-residue chain is Alanine--tRNA ligase (885 aa).

Residues His-564, His-568, Cys-676, and His-680 each coordinate Zn(2+).

Belongs to the class-II aminoacyl-tRNA synthetase family. Zn(2+) is required as a cofactor.

Its subcellular location is the cytoplasm. It catalyses the reaction tRNA(Ala) + L-alanine + ATP = L-alanyl-tRNA(Ala) + AMP + diphosphate. Catalyzes the attachment of alanine to tRNA(Ala) in a two-step reaction: alanine is first activated by ATP to form Ala-AMP and then transferred to the acceptor end of tRNA(Ala). Also edits incorrectly charged Ser-tRNA(Ala) and Gly-tRNA(Ala) via its editing domain. The sequence is that of Alanine--tRNA ligase from Brucella anthropi (strain ATCC 49188 / DSM 6882 / CCUG 24695 / JCM 21032 / LMG 3331 / NBRC 15819 / NCTC 12168 / Alc 37) (Ochrobactrum anthropi).